A 144-amino-acid chain; its full sequence is MPTINQLVRKPRKRVTKKVKAPALRFSLNVLKGKLTRGKGSPFKRGVCTQVRTMTPKKPNSALRKIARVRLSNGMEVTAYIPGEGHNLQEHSVVLIRGGRVKDLPGVRYHIVRGTLDAQGVANRKQGRSKYGTKKASAVPAKKK.

Asp103 carries the 3-methylthioaspartic acid modification. The interval Val121 to Lys144 is disordered.

The protein belongs to the universal ribosomal protein uS12 family. As to quaternary structure, part of the 30S ribosomal subunit. Contacts proteins S8 and S17. May interact with IF1 in the 30S initiation complex.

Functionally, with S4 and S5 plays an important role in translational accuracy. In terms of biological role, interacts with and stabilizes bases of the 16S rRNA that are involved in tRNA selection in the A site and with the mRNA backbone. Located at the interface of the 30S and 50S subunits, it traverses the body of the 30S subunit contacting proteins on the other side and probably holding the rRNA structure together. The combined cluster of proteins S8, S12 and S17 appears to hold together the shoulder and platform of the 30S subunit. This is Small ribosomal subunit protein uS12 from Roseiflexus castenholzii (strain DSM 13941 / HLO8).